A 154-amino-acid polypeptide reads, in one-letter code: Transcription antitermination protein NusB (154 aa).

This sequence belongs to the NusB family.

Functionally, involved in transcription antitermination. Required for transcription of ribosomal RNA (rRNA) genes. Binds specifically to the boxA antiterminator sequence of the ribosomal RNA (rrn) operons. The protein is Transcription antitermination protein NusB of Desulfosudis oleivorans (strain DSM 6200 / JCM 39069 / Hxd3) (Desulfococcus oleovorans).